Reading from the N-terminus, the 360-residue chain is Phospho-N-acetylmuramoyl-pentapeptide-transferase (360 aa).

The Periplasmic portion of the chain corresponds to 1 to 25; it reads MLVWLAEHLVKYYSGFNVFSYLTFR. The helical transmembrane segment at 26 to 46 threads the bilayer; that stretch reads AIVSLLTALFISLWMGPRMIA. The Cytoplasmic portion of the chain corresponds to 47 to 71; it reads RLQKLSFGQVVRNDGPESHFSKRGT. The helical transmembrane segment at 72-92 threads the bilayer; that stretch reads PTMGGIMILTSIVISVLLWAY. A topological domain (periplasmic) is located at residue Pro-93. A helical membrane pass occupies residues 94–114; it reads SNPYVWCVLVVLIGYGIIGFV. Residues 115-131 lie on the Cytoplasmic side of the membrane; it reads DDYRKVVRKDTKGLIAR. Residues 132 to 152 form a helical membrane-spanning segment; it reads WKYFWMSVIALGVAFALYLVG. The Periplasmic segment spans residues 153-167; that stretch reads KDTPATQLVVPFFKD. A helical membrane pass occupies residues 168-188; that stretch reads VMPQLGLFYILLSYFVIVGTG. The Cytoplasmic segment spans residues 189-198; that stretch reads NAVNLTDGLD. The helical transmembrane segment at 199-219 threads the bilayer; it reads GLAIMPTVFVAAGFALVAWAT. The Periplasmic segment spans residues 220 to 235; that stretch reads GNMNFANYLHIPYLRH. The helical transmembrane segment at 236–256 threads the bilayer; it reads AGELVIVCTAIVGAGLGFLWF. Over 257–262 the chain is Cytoplasmic; the sequence is NTYPAQ. The chain crosses the membrane as a helical span at residues 263-283; it reads VFMGDVGSLALGGALGIIAVL. Residues 284 to 287 are Periplasmic-facing; sequence LRQE. Residues 288 to 308 form a helical membrane-spanning segment; that stretch reads FLLVIMGGVFVVETLSVILQV. The Cytoplasmic segment spans residues 309-337; it reads GSFKLRGQRIFRMAPIHHHYELKGWPEPR. Residues 338–358 traverse the membrane as a helical segment; sequence VIVRFWIISLMLVLIGLATLK. The Periplasmic segment spans residues 359 to 360; sequence VR.

The protein belongs to the glycosyltransferase 4 family. MraY subfamily. It depends on Mg(2+) as a cofactor.

The protein resides in the cell inner membrane. It catalyses the reaction UDP-N-acetyl-alpha-D-muramoyl-L-alanyl-gamma-D-glutamyl-meso-2,6-diaminopimeloyl-D-alanyl-D-alanine + di-trans,octa-cis-undecaprenyl phosphate = di-trans,octa-cis-undecaprenyl diphospho-N-acetyl-alpha-D-muramoyl-L-alanyl-D-glutamyl-meso-2,6-diaminopimeloyl-D-alanyl-D-alanine + UMP. It functions in the pathway cell wall biogenesis; peptidoglycan biosynthesis. Catalyzes the initial step of the lipid cycle reactions in the biosynthesis of the cell wall peptidoglycan: transfers peptidoglycan precursor phospho-MurNAc-pentapeptide from UDP-MurNAc-pentapeptide onto the lipid carrier undecaprenyl phosphate, yielding undecaprenyl-pyrophosphoryl-MurNAc-pentapeptide, known as lipid I. The protein is Phospho-N-acetylmuramoyl-pentapeptide-transferase of Salmonella gallinarum (strain 287/91 / NCTC 13346).